We begin with the raw amino-acid sequence, 178 residues long: Dual-action ribosomal maturation protein DarP (178 aa).

It belongs to the DarP family.

The protein resides in the cytoplasm. Its function is as follows. Member of a network of 50S ribosomal subunit biogenesis factors which assembles along the 30S-50S interface, preventing incorrect 23S rRNA structures from forming. Promotes peptidyl transferase center (PTC) maturation. This is Dual-action ribosomal maturation protein DarP from Haemophilus influenzae (strain 86-028NP).